A 606-amino-acid polypeptide reads, in one-letter code: DNA mismatch repair protein MutL (606 aa).

The disordered stretch occupies residues M340–P366. Residues R353–P366 show a composition bias toward low complexity.

Belongs to the DNA mismatch repair MutL/HexB family.

Functionally, this protein is involved in the repair of mismatches in DNA. It is required for dam-dependent methyl-directed DNA mismatch repair. May act as a 'molecular matchmaker', a protein that promotes the formation of a stable complex between two or more DNA-binding proteins in an ATP-dependent manner without itself being part of a final effector complex. The sequence is that of DNA mismatch repair protein MutL from Agrobacterium fabrum (strain C58 / ATCC 33970) (Agrobacterium tumefaciens (strain C58)).